We begin with the raw amino-acid sequence, 831 residues long: Probable inactive serine/threonine-protein kinase DDB_G0274613 (831 aa).

The segment at 9–63 (CSICSEEVIDFAAIFSSNKKFGDKACKHNFCVSCLTYLMEYNTRNKKALCCPICR) adopts an RING-type zinc-finger fold. Residues 83-348 (RKLSSAQIFL…LEEMKLLYQF (266 aa)) are a coiled coil. One can recognise a Protein kinase domain in the interval 414–787 (QIHKVSIGNG…ANQAAFHKFF (374 aa)). The interval 657-703 (NNNNNNNNNNNNNNNNNNNNNNNNNNNNNNNNNNNNNNNNNIESNFN) is disordered.

This sequence belongs to the protein kinase superfamily. CMGC Ser/Thr protein kinase family.

The protein is Probable inactive serine/threonine-protein kinase DDB_G0274613 of Dictyostelium discoideum (Social amoeba).